Here is a 458-residue protein sequence, read N- to C-terminus: Bifunctional protein GlmU (458 aa).

Residues 1-230 are pyrophosphorylase; that stretch reads MENRYAIILA…FDEAMGVNDR (230 aa). UDP-N-acetyl-alpha-D-glucosamine contacts are provided by residues 9–12, lysine 23, glutamine 73, and 78–79; these read LAAG and GT. Aspartate 103 provides a ligand contact to Mg(2+). Residues glycine 140, glutamate 155, asparagine 170, and asparagine 228 each coordinate UDP-N-acetyl-alpha-D-glucosamine. Residue asparagine 228 coordinates Mg(2+). The linker stretch occupies residues 231–251; sequence VALSTANKIMHRRLNEMHMRN. The tract at residues 252–458 is N-acetyltransferase; sequence GVTFIDPDTT…YAKKLPYMKD (207 aa). UDP-N-acetyl-alpha-D-glucosamine-binding residues include arginine 333 and lysine 351. The active-site Proton acceptor is the histidine 363. UDP-N-acetyl-alpha-D-glucosamine-binding residues include tyrosine 366 and asparagine 377. Residues 386 to 387, serine 405, alanine 423, and arginine 440 contribute to the acetyl-CoA site; that span reads NY.

The protein in the N-terminal section; belongs to the N-acetylglucosamine-1-phosphate uridyltransferase family. In the C-terminal section; belongs to the transferase hexapeptide repeat family. As to quaternary structure, homotrimer. The cofactor is Mg(2+).

The protein localises to the cytoplasm. It carries out the reaction alpha-D-glucosamine 1-phosphate + acetyl-CoA = N-acetyl-alpha-D-glucosamine 1-phosphate + CoA + H(+). The enzyme catalyses N-acetyl-alpha-D-glucosamine 1-phosphate + UTP + H(+) = UDP-N-acetyl-alpha-D-glucosamine + diphosphate. It participates in nucleotide-sugar biosynthesis; UDP-N-acetyl-alpha-D-glucosamine biosynthesis; N-acetyl-alpha-D-glucosamine 1-phosphate from alpha-D-glucosamine 6-phosphate (route II): step 2/2. Its pathway is nucleotide-sugar biosynthesis; UDP-N-acetyl-alpha-D-glucosamine biosynthesis; UDP-N-acetyl-alpha-D-glucosamine from N-acetyl-alpha-D-glucosamine 1-phosphate: step 1/1. The protein operates within bacterial outer membrane biogenesis; LPS lipid A biosynthesis. Catalyzes the last two sequential reactions in the de novo biosynthetic pathway for UDP-N-acetylglucosamine (UDP-GlcNAc). The C-terminal domain catalyzes the transfer of acetyl group from acetyl coenzyme A to glucosamine-1-phosphate (GlcN-1-P) to produce N-acetylglucosamine-1-phosphate (GlcNAc-1-P), which is converted into UDP-GlcNAc by the transfer of uridine 5-monophosphate (from uridine 5-triphosphate), a reaction catalyzed by the N-terminal domain. The sequence is that of Bifunctional protein GlmU from Enterococcus faecalis (strain ATCC 700802 / V583).